Here is a 1741-residue protein sequence, read N- to C-terminus: Protein wings apart-like (1741 aa).

Disordered regions lie at residues 68-100 (SPSQSPASTQDHDPNDLSVSVPEPPKPKKFFKS), 119-277 (CGAG…EVAA), 291-472 (SSTF…KPPK), 490-612 (KAAA…VQED), 675-810 (LAVL…ASVN), 823-963 (KAEA…QRGA), 1038-1068 (AAGKSDGDFGDSPSSNNNGSSSACSSASTLR), 1112-1141 (SAAGASAGGTGATTGGGGATGGGGPVRVDR), and 1708-1741 (TSSTTVGSGSAPSSTSATGTTRAPRVYKTYSSHR). Basic residues predominate over residues 165 to 174 (RKRKSPKKKA). Residues 175–185 (ATTSASTPSTP) are compositionally biased toward low complexity. The residue at position 258 (T258) is a Phosphothreonine. Residues 309-334 (APSASASTSSQLPSASGSASNPPSAS) are compositionally biased toward low complexity. S355 carries the post-translational modification Phosphoserine. The span at 367 to 377 (AHQNQLNQLSV) shows a compositional bias: polar residues. Positions 408 to 426 (AADSVDGSSAAVGGASAGD) are enriched in low complexity. Acidic residues predominate over residues 438–456 (PNEDEEEEEEEEDEEEEPP). Residues 503-512 (SRSKKHKHKQ) show a composition bias toward basic residues. 2 stretches are compositionally biased toward low complexity: residues 515 to 529 (AAGSGAAPASGATPA) and 553 to 568 (QHTPSHLHQLHQLHPQ). Residues 586 to 604 (SQSSVLGSISSKGNSTPQL) show a composition bias toward polar residues. Composition is skewed to low complexity over residues 796–810 (NAAARANNNNLASVN) and 849–859 (QQVTQVLQQEP). The span at 860–873 (VPEEQETPDAEEEQ) shows a compositional bias: acidic residues. A compositionally biased stretch (basic and acidic residues) spans 880-894 (PHTDHREHSPDHDPD). S888 bears the Phosphoserine mark. 2 stretches are compositionally biased toward low complexity: residues 939-952 (GAANAGAGGAAAAA) and 1047-1065 (GDSPSSNNNGSSSACSSAS). Over residues 1117-1136 (SAGGTGATTGGGGATGGGGP) the composition is skewed to gly residues. The WAPL domain maps to 1140–1648 (DRKTKDYYPV…EKYHTFMNLT (509 aa)). Low complexity predominate over residues 1708–1730 (TSSTTVGSGSAPSSTSATGTTRA).

Belongs to the WAPL family.

Functionally, has a role in female meiotic chromosome segregation in females; proximal heterochromatin is involved in chromosome pairing during female meiosis. Is a dominant suppressor of both white and Stubble position-effect variegation (PEV), while it is a weak enhancer of brown variegation. The polypeptide is Protein wings apart-like (Drosophila melanogaster (Fruit fly)).